Here is a 146-residue protein sequence, read N- to C-terminus: Hemoglobin subunit beta-1 (146 aa).

In terms of domain architecture, Globin spans 2-146 (EWTDAEKSTI…VVAAMGSRYF (145 aa)). Histidine 63 and histidine 92 together coordinate heme b.

Belongs to the globin family. Heterotetramer of two alpha chains and two beta chains. Red blood cells.

In terms of biological role, involved in oxygen transport from gills to the various peripheral tissues. The polypeptide is Hemoglobin subunit beta-1 (hbb1) (Oncorhynchus mykiss (Rainbow trout)).